Reading from the N-terminus, the 319-residue chain is Vesicle-associated membrane protein-associated protein scs22 (319 aa).

In terms of domain architecture, MSP spans 1 to 121; that stretch reads MALECDSTIV…SERKIRCVYS (121 aa). Topologically, residues 1-298 are cytoplasmic; that stretch reads MALECDSTIV…GAKVVPQIHN (298 aa). Over residues 127–150 the composition is skewed to low complexity; the sequence is ANAHANAHHQPAQTTTTSIPTSAT. The tract at residues 127-244 is disordered; sequence ANAHANAHHQ…TTSPNNENNA (118 aa). 3 stretches are compositionally biased toward polar residues: residues 151 to 165, 185 to 201, and 231 to 244; these read DNYT…QSYS, STAT…SAVS, and SVPT…ENNA. Residue threonine 236 is modified to Phosphothreonine. Phosphoserine occurs at positions 237 and 281. A helical; Anchor for type IV membrane protein transmembrane segment spans residues 299 to 319; that stretch reads TVTVQTAFLLAIICFLIGLLF.

It belongs to the VAMP-associated protein (VAP) (TC 9.B.17) family. In terms of assembly, interacts with epr1.

The protein localises to the endoplasmic reticulum membrane. Its function is as follows. Vesicle-associated membrane protein-associated protein (VAP) implicated in maintaining the cortical endoplasmic reticulum (ER)-plasma membrane (PM) attachment. ER-PM contacts function to modulate the distribution of contractile ring components to ensure robust ring assembly. ER-PM contacts function also in controlling exocytosis and maintenance of cell polarity regulating cell shape. VAPs play an important role in regulating eisosome assembly. VAPs also contribute to ER-phagy by tethering atg8 to the ER membrane, but also by maintaining the ER-plasma membrane contact. The sequence is that of Vesicle-associated membrane protein-associated protein scs22 (scs22) from Schizosaccharomyces pombe (strain 972 / ATCC 24843) (Fission yeast).